Reading from the N-terminus, the 111-residue chain is Cell division protein FtsB (111 aa).

Topologically, residues 1-3 (MGK) are cytoplasmic. A helical membrane pass occupies residues 4-21 (LTLLLLILLGWLQYSLWL). Topologically, residues 22-111 (GKNGIHDYVR…TNTPSNNIQR (90 aa)) are periplasmic. Residues 33–63 (KDDVVVQQGNNAKLKDRNEQLFAEIDDLNGG) are a coiled coil. Positions 90 to 111 (ESNHRNANTAPSTNTPSNNIQR) are disordered. A compositionally biased stretch (low complexity) spans 95–111 (NANTAPSTNTPSNNIQR).

Belongs to the FtsB family. In terms of assembly, part of a complex composed of FtsB, FtsL and FtsQ.

It localises to the cell inner membrane. In terms of biological role, essential cell division protein. May link together the upstream cell division proteins, which are predominantly cytoplasmic, with the downstream cell division proteins, which are predominantly periplasmic. The sequence is that of Cell division protein FtsB from Pectobacterium carotovorum subsp. carotovorum (strain PC1).